We begin with the raw amino-acid sequence, 1149 residues long: cGMP-specific 3',5'-cyclic phosphodiesterase (1149 aa).

Low complexity-rich tracts occupy residues 1–19 and 31–47; these read MHGTVSRSSSSSNMTDVSS and ATSSSTAATTSASASSS. Residues 1–175 are disordered; the sequence is MHGTVSRSSS…STTASQQDVD (175 aa). Residues 48–59 show a composition bias toward polar residues; that stretch reads KPLTNGANKTAI. The span at 60 to 85 shows a compositional bias: low complexity; the sequence is STAAGVTPGAAPGPGCAAIPASGSSG. A compositionally biased stretch (polar residues) spans 96–108; that stretch reads QSNNNRPAGSNRS. Residues 132–158 show a composition bias toward low complexity; sequence SSSSPSQSPSQSQSQSQASIQTQTSQQ. GAF domains are found at residues 278 to 430 and 462 to 643; these read DIDV…GIGI and NLEC…GLGI. The 324-residue stretch at 673–996 folds into the PDEase domain; the sequence is SQDQTEKLTQ…RNWQDLAEKV (324 aa). The active-site Proton donor is the H749. A divalent metal cation-binding residues include H753, H789, D790, and D900. Disordered regions lie at residues 1037–1066 and 1096–1149; these read QQSQHGSEDSHTPEHQRSGSRLSMKKTGAL and SHVS…CALL. 2 stretches are compositionally biased toward basic and acidic residues: residues 1042 to 1053 and 1096 to 1106; these read GSEDSHTPEHQR and SHVSEDMDDKS. Residues 1115 to 1135 are compositionally biased toward low complexity; the sequence is ASGSMGRMSASSSTSSAGGQM. The span at 1139–1149 shows a compositional bias: basic residues; it reads SKKRSKLCALL. Residue C1146 is modified to Cysteine methyl ester. C1146 is lipidated: S-farnesyl cysteine. Residues 1147 to 1149 constitute a propeptide, removed in mature form; it reads ALL.

This sequence belongs to the cyclic nucleotide phosphodiesterase family. As to quaternary structure, interacts with PrBP. A divalent metal cation is required as a cofactor.

It is found in the cell membrane. The enzyme catalyses 3',5'-cyclic GMP + H2O = GMP + H(+). Functionally, has a role regulating cGMP transport in Malpighian tubule principal cells. This chain is cGMP-specific 3',5'-cyclic phosphodiesterase, found in Drosophila yakuba (Fruit fly).